We begin with the raw amino-acid sequence, 307 residues long: Aspartate carbamoyltransferase catalytic subunit (307 aa).

Residues Arg54 and Thr55 each coordinate carbamoyl phosphate. Lys83 provides a ligand contact to L-aspartate. Carbamoyl phosphate is bound by residues Arg104, His132, and Gln135. Residues Arg165 and Arg228 each coordinate L-aspartate. Carbamoyl phosphate contacts are provided by Leu267 and Pro268.

Belongs to the aspartate/ornithine carbamoyltransferase superfamily. ATCase family. As to quaternary structure, heterododecamer (2C3:3R2) of six catalytic PyrB chains organized as two trimers (C3), and six regulatory PyrI chains organized as three dimers (R2).

It carries out the reaction carbamoyl phosphate + L-aspartate = N-carbamoyl-L-aspartate + phosphate + H(+). It participates in pyrimidine metabolism; UMP biosynthesis via de novo pathway; (S)-dihydroorotate from bicarbonate: step 2/3. Its function is as follows. Catalyzes the condensation of carbamoyl phosphate and aspartate to form carbamoyl aspartate and inorganic phosphate, the committed step in the de novo pyrimidine nucleotide biosynthesis pathway. The chain is Aspartate carbamoyltransferase catalytic subunit from Clostridium acetobutylicum (strain ATCC 824 / DSM 792 / JCM 1419 / IAM 19013 / LMG 5710 / NBRC 13948 / NRRL B-527 / VKM B-1787 / 2291 / W).